An 880-amino-acid polypeptide reads, in one-letter code: Interference hedgehog (880 aa).

A signal peptide spans 1–20 (MPSIVSSLLLVVLLTSPLGA). Residues 21–703 (IPVLYPSPPP…SHNETFSMSP (683 aa)) lie on the Extracellular side of the membrane. 4 consecutive Ig-like C2-type domains span residues 37-142 (PGVR…TARL), 154-235 (PVTS…STSS), 251-339 (PYLL…FIQV), and 345-432 (PQIV…LQVT). Disulfide bonds link Cys60–Cys126, Cys172–Cys219, Cys275–Cys323, and Cys366–Cys414. N-linked (GlcNAc...) asparagine glycosylation is found at Asn79, Asn102, and Asn208. The tract at residues 435-468 (PIHSESTQQSDHNHSKANRGRRPAQMIPPSAPNV) is disordered. 2 N-linked (GlcNAc...) asparagine glycosylation sites follow: Asn447 and Asn467. Fibronectin type-III domains follow at residues 462–570 (PPSA…LQPG) and 578–673 (VPEM…TQRP). Heparin is bound by residues Arg498, Lys504, Lys506, and Arg544. N-linked (GlcNAc...) asparagine glycosylation occurs at Asn560. Residues 665–699 (LKQGRTQRPMVSTTEEATLQTGVRDTTTPSHNETF) form a disordered region. A compositionally biased stretch (polar residues) spans 668–699 (GRTQRPMVSTTEEATLQTGVRDTTTPSHNETF). An N-linked (GlcNAc...) asparagine glycan is attached at Asn696. The helical transmembrane segment at 704-724 (IVTGTIGGGAVLILFVVTTCL) threads the bilayer. The Cytoplasmic portion of the chain corresponds to 725–880 (CMWRRRNSRA…SSGSLNSVGV (156 aa)). Residues 797–880 (YFQRQPTYDY…SSGSLNSVGV (84 aa)) are disordered. 2 stretches are compositionally biased toward low complexity: residues 827 to 839 (RAGS…NNLN) and 864 to 880 (SSRS…SVGV).

This sequence belongs to the immunoglobulin superfamily. IHOG family. Homodimer. Heterotetramer; 2 iHog chains bind 2 hh chains when facilitated by heparin, heparin is required to promote high-affinity interactions between hh and iHog.

The protein resides in the membrane. In terms of biological role, mediates response to the active Hedgehog (Hh) protein signal in embryos, functioning upstream or at the level of patched (ptc). This chain is Interference hedgehog, found in Drosophila ananassae (Fruit fly).